We begin with the raw amino-acid sequence, 224 residues long: Ribose-5-phosphate isomerase A 2 (224 aa).

Residues S27–T30, D83–D86, and K96–G99 contribute to the substrate site. The active-site Proton acceptor is the E105. K123 is a substrate binding site.

The protein belongs to the ribose 5-phosphate isomerase family. As to quaternary structure, homodimer.

The catalysed reaction is aldehydo-D-ribose 5-phosphate = D-ribulose 5-phosphate. Its pathway is carbohydrate degradation; pentose phosphate pathway; D-ribose 5-phosphate from D-ribulose 5-phosphate (non-oxidative stage): step 1/1. Functionally, catalyzes the reversible conversion of ribose-5-phosphate to ribulose 5-phosphate. In Oceanobacillus iheyensis (strain DSM 14371 / CIP 107618 / JCM 11309 / KCTC 3954 / HTE831), this protein is Ribose-5-phosphate isomerase A 2.